The following is a 122-amino-acid chain: Small ribosomal subunit protein uS13 (122 aa).

Positions Pro-97–Lys-122 are disordered.

It belongs to the universal ribosomal protein uS13 family. In terms of assembly, part of the 30S ribosomal subunit. Forms a loose heterodimer with protein S19. Forms two bridges to the 50S subunit in the 70S ribosome.

Functionally, located at the top of the head of the 30S subunit, it contacts several helices of the 16S rRNA. In the 70S ribosome it contacts the 23S rRNA (bridge B1a) and protein L5 of the 50S subunit (bridge B1b), connecting the 2 subunits; these bridges are implicated in subunit movement. Contacts the tRNAs in the A and P-sites. The chain is Small ribosomal subunit protein uS13 from Rhizobium rhizogenes (strain K84 / ATCC BAA-868) (Agrobacterium radiobacter).